The chain runs to 432 residues: 5-hydroxybenzimidazole synthase BzaA (432 aa).

Substrate is bound by residues Met-95, Tyr-124, His-163, 185–187, and 226–229; these read SYG and DGMR. Zn(2+) is bound at residue His-269. Residue Phe-292 coordinates substrate. A Zn(2+)-binding site is contributed by His-333. Positions 409, 412, and 416 each coordinate [4Fe-4S] cluster.

The protein belongs to the ThiC family. 5-hydroxybenzimidazole synthase subfamily. It depends on [4Fe-4S] cluster as a cofactor.

It carries out the reaction 5-amino-1-(5-phospho-beta-D-ribosyl)imidazole + AH2 + S-adenosyl-L-methionine = 5-hydroxybenzimidazole + 5'-deoxyadenosine + formate + L-methionine + A + NH4(+) + phosphate + 2 H(+). Together with BzaB, probably catalyzes the conversion of aminoimidazole ribotide (AIR) to 5-hydroxybenzimidazole (5-HBI) in a radical S-adenosyl-L-methionine (SAM)-dependent reaction. Is thus involved in the anaerobic biosynthesis of the benzimidazole lower axial ligand of the cobamide produced by M.thermoacetica. Requires BzaB for catalytic activity, as BzaA alone displays no activity. This is 5-hydroxybenzimidazole synthase BzaA from Moorella thermoacetica (strain ATCC 39073 / JCM 9320).